The sequence spans 51 residues: Protein YrhD (51 aa).

The protein is Protein YrhD (yrhD) of Escherichia coli (strain K12).